The following is an 892-amino-acid chain: Protein FAM193B (892 aa).

Disordered regions lie at residues 1 to 78 (MTRR…TSSQ), 164 to 192 (SCGG…NSGD), 237 to 321 (EHHQ…PLLK), and 379 to 403 (DEGL…THPR). Pro residues predominate over residues 28–37 (APEPQPPPPS). Over residues 56–65 (DGPREEEEPK) the composition is skewed to basic and acidic residues. The span at 169-185 (SHSSSSSSSSSSSSSSS) shows a compositional bias: low complexity. 3 stretches are compositionally biased toward pro residues: residues 248–258 (PNSPTGPPPHP), 274–285 (YPPPLPTTPVAP), and 309–321 (SPHP…PLLK). Positions 379–388 (DEGLGEEEDS) are enriched in acidic residues. Residues 391-400 (ERSSCTSSST) are compositionally biased toward low complexity. Positions 485-517 (NSARAAKRARHKLKKKEKEKARLATEALKQVNR) form a coiled coil. 2 stretches are compositionally biased toward polar residues: residues 587 to 597 (LTPSDLSGSSQ) and 610 to 621 (TLGSPQSHTLQA). 2 disordered regions span residues 587–655 (LTPS…ENGL) and 671–837 (VKTP…SLDD). Residues 637-650 (PPPWTEVRGPPPGI) are compositionally biased toward pro residues. Residues 736-757 (KSQVSSPKQPSKGSEPAKVGSG) are compositionally biased toward low complexity. Phosphoserine is present on residues serine 764, serine 776, and serine 882.

The protein belongs to the FAM193 family.

The protein resides in the cytoplasm. The protein localises to the nucleus. The polypeptide is Protein FAM193B (Fam193b) (Mus musculus (Mouse)).